A 90-amino-acid polypeptide reads, in one-letter code: MELAVVSVLGADRVGIVAGISSVLAKHNVNIVDISQTVVQNIFSMVMIVDISKADVDISQLRRELEEEGKRLGVMVAVYHIDVFKYMQRI.

Residues 5–74 (VVSVLGADRV…LEEEGKRLGV (70 aa)) form the ACT domain.

It belongs to the UPF0237 family.

This chain is UPF0237 protein PAE3582, found in Pyrobaculum aerophilum (strain ATCC 51768 / DSM 7523 / JCM 9630 / CIP 104966 / NBRC 100827 / IM2).